Here is a 450-residue protein sequence, read N- to C-terminus: Benzene 1,2-dioxygenase subunit alpha (450 aa).

In terms of domain architecture, Rieske spans 54 to 163 (WLLLGHETQI…VETYKGLIFA (110 aa)). Positions 96, 98, 116, and 119 each coordinate [2Fe-2S] cluster. His222 and His228 together coordinate Fe cation.

Belongs to the bacterial ring-hydroxylating dioxygenase alpha subunit family. As to quaternary structure, this dioxygenase system consists of four proteins: the two subunits of the hydroxylase component (BnzA and BnzB), a ferredoxin (BnzC) and a ferredoxin reductase (BnzD). [2Fe-2S] cluster is required as a cofactor. It depends on Fe cation as a cofactor.

It carries out the reaction benzene + NADH + O2 + H(+) = cis-1,2-dihydrobenzene-1,2-diol + NAD(+). The catalysed reaction is toluene + NADH + O2 + H(+) = (1S,2R)-3-methylcyclohexa-3,5-diene-1,2-diol + NAD(+). Its pathway is aromatic compound metabolism; benzene degradation; catechol from benzene: step 1/2. The protein operates within xenobiotic degradation; toluene degradation. It participates in xenobiotic degradation; xylene degradation. Functionally, catalyzes both the oxidation of benzene and toluene. This is Benzene 1,2-dioxygenase subunit alpha (bnzA) from Pseudomonas putida (strain ATCC 700007 / DSM 6899 / JCM 31910 / BCRC 17059 / LMG 24140 / F1).